The chain runs to 398 residues: 1-deoxy-D-xylulose 5-phosphate reductoisomerase (398 aa).

The NADPH site is built by Thr10, Gly11, Ser12, Ile13, Asn38, and Asn124. Lys125 contacts 1-deoxy-D-xylulose 5-phosphate. Residue Glu126 participates in NADPH binding. Mn(2+) is bound at residue Asp150. Residues Ser151, Glu152, Ser176, and His199 each contribute to the 1-deoxy-D-xylulose 5-phosphate site. Residue Glu152 coordinates Mn(2+). Residue Gly205 coordinates NADPH. Residues Ser212, Asn217, Lys218, and Glu221 each contribute to the 1-deoxy-D-xylulose 5-phosphate site. Glu221 contacts Mn(2+).

Belongs to the DXR family. Mg(2+) is required as a cofactor. It depends on Mn(2+) as a cofactor.

The catalysed reaction is 2-C-methyl-D-erythritol 4-phosphate + NADP(+) = 1-deoxy-D-xylulose 5-phosphate + NADPH + H(+). It participates in isoprenoid biosynthesis; isopentenyl diphosphate biosynthesis via DXP pathway; isopentenyl diphosphate from 1-deoxy-D-xylulose 5-phosphate: step 1/6. In terms of biological role, catalyzes the NADPH-dependent rearrangement and reduction of 1-deoxy-D-xylulose-5-phosphate (DXP) to 2-C-methyl-D-erythritol 4-phosphate (MEP). The protein is 1-deoxy-D-xylulose 5-phosphate reductoisomerase of Crocosphaera subtropica (strain ATCC 51142 / BH68) (Cyanothece sp. (strain ATCC 51142)).